A 252-amino-acid chain; its full sequence is Ribosomal RNA small subunit methyltransferase J (252 aa).

Residues 105 to 106 (RD), 121 to 122 (ER), and aspartate 175 each bind S-adenosyl-L-methionine.

The protein belongs to the methyltransferase superfamily. RsmJ family.

It is found in the cytoplasm. It carries out the reaction guanosine(1516) in 16S rRNA + S-adenosyl-L-methionine = N(2)-methylguanosine(1516) in 16S rRNA + S-adenosyl-L-homocysteine + H(+). Functionally, specifically methylates the guanosine in position 1516 of 16S rRNA. In Pasteurella multocida (strain Pm70), this protein is Ribosomal RNA small subunit methyltransferase J.